Here is a 729-residue protein sequence, read N- to C-terminus: Serine/threonine-protein kinase TBK1 (729 aa).

In terms of domain architecture, Protein kinase spans 9-310; it reads WLLSDILGQG…ETSDILHRMV (302 aa). An ATP-binding site is contributed by 15–23; that stretch reads LGQGATANV. Residue lysine 30 forms a Glycyl lysine isopeptide (Lys-Gly) (interchain with G-Cter in ubiquitin) linkage. Position 38 (lysine 38) interacts with ATP. Catalysis depends on aspartate 135, which acts as the Proton acceptor. A Phosphoserine; by autocatalysis and IKKB modification is found at serine 172. One can recognise a Ubiquitin-like domain in the interval 309–385; the sequence is MVIHVFSLQQ…ENPIFVVSRE (77 aa). Lysine 401 participates in a covalent cross-link: Glycyl lysine isopeptide (Lys-Gly) (interchain with G-Cter in ubiquitin). Coiled-coil stretches lie at residues 407 to 657 and 658 to 713; these read DLDG…LQET and LPQK…ILER. An N6-methyllysine; by SETD4 modification is found at lysine 607. The tract at residues 621–729 is interaction with AZI2, TANK and TBKBP1; that stretch reads RKMLHLRKQL…DGGLRNVDCL (109 aa). A Glycyl lysine isopeptide (Lys-Gly) (interchain with G-Cter in ubiquitin) cross-link involves residue lysine 670. Phosphoserine is present on serine 716.

This sequence belongs to the protein kinase superfamily. Ser/Thr protein kinase family. I-kappa-B kinase subfamily. As to quaternary structure, homodimer. Interacts with DDX3X, TIRAP and TRAF2. Part of a ternary complex consisting of TANK, TRAF2 and TBK1. Interacts with AZI2, TANK and TBKBP1; these interactions are mutually exclusive and mediate TBK1 activation. Interacts with GSK3B; this interaction promotes TBK1 self-association and autophosphorylation. Interacts with SIKE1; SIKE1 is associated with TBK1 under physiological condition and dissociated from TBK1 upon viral infection or TLR3 stimulation. Interacts with IRF3, leading to IRF3 phosphorylation. Interacts with RIGI. Interacts with CYLD. Interacts with OPTN and TRAF3. Interacts with SRC. Interacts with the exocyst complex subunit SEC5/EXOC2; this interaction is sufficient to trigger TBK1 activity. Interacts with STING1, leading to STING1 phosphorylation. Interacts with IFIT3 (via N-terminus). Interacts with MAVS; interaction only takes place in the presence of IFIT3 and leads to MAVS phosphorylation. Interacts (via protein kinase domain) with TTLL12 (via TTL domain); the interaction prevents MAVS binding to TBK1. Interacts with TICAM1; this interaction is enhanced in the presence of WDFY1 and leads to TICAM1 phosphorylation. Interacts with TRIM26. Interacts with TRIM23. Interacts with TTC4 and IKBKE. Interacts with HNRNPA2B1. Interacts with DDX3X. Interacts with TRIM14. Interacts with CEP170; efficient complex formation may be dependent on the presence of CCDC61. Interacts with TRAF3IP3. Interacts with HSP90AA1; the interaction mediates TBK1 association with TOMM70. Interacts with TAX1BP1. Interacts with kinase IKBKB; the complex interacts with STAT1, leading to phosphorylation of STAT1 on 'Thr-749' by IKBKB. Interacts with ICOS; this interaction is critical for the maturation of T follicular regulatory cells. Interacts with RNF144B; this interaction prevents TBK1 phosphorylation and subsequent activation. Interacts with ASB8; this interaction promotes TBK1 proteasomal degradation. Forms a ternary complex with ZNF268 and SETD4; the interaction with SETD4 is ZNF268-dependent and leads to TBK1 monomethylation, which enhances its interaction with IRF3 and MAVS. (Microbial infection) Interacts with Borna disease virus (BDV) P protein leading to its phosphorylation. In terms of assembly, (Microbial infection) Interacts with Ebola virus protein VP35. As to quaternary structure, (Microbial infection) Interacts with HCV NS3; this interaction leads to inhibition of cellular antiviral response by blocking necessary interactions between the TBK1 and its substrates IRF3 and IRF7. (Microbial infection) Interacts with human herpesvirus 1 protein ICP34.5. In terms of assembly, (Microbial infection) Interacts with Zika virus non-structural protein 1/NS1 and non-structural protein 4B/NS4B. As to quaternary structure, (Microbial infection) Interacts with SARS-CoV-2 non-structural protein 6; this interaction decreases IRF3 phosphorylation by 57%, which leads to reduced IFN-beta (IFNB) production. Interacts with SARS-CoV-2 helicase; this interaction inhibits TBK1 phosphorylation and decreases IRF3 phosphorylation by 75%, which leads to reduced IFN-beta production. Interacts with SARS-CoV-2 M protein; the interaction promotes TBK1 degradation via 'Lys-48'-linked ubiquitination. (Microbial infection) Interacts with human cytomegalovirus protein UL35; this interaction inhibits type I interferon production. In terms of assembly, (Microbial infection) Interacts with heartland virus NSs; this interaction antagonizes TBK1 phosphorylation and inhibits TBK1-IRF3 interaction and thus the establishment of an antiviral state. As to quaternary structure, (Microbial infection) Interacts (via N-terminus) with Severe fever with thrombocytopenia virus (SFTSV) NSs; this interaction antagonizes TBK1 phosphorylation and sequesters TBK1 in NSs-induced cytoplasmic inclusion bodies thereby inhibiting the IFN responses. Post-translationally, autophosphorylation at Ser-172 activates the kinase, and is an essential step for virus-triggered signaling. Phosphorylated by IKBKB/IKKB at Ser-172. Phosphorylation requires homodimerization and ubiquitination at Lys-30 and Lys-401. Dephosphorylated at Ser-172 by PPM1B and this negatively regulates its role in mediating antiviral response. 'Lys-63'-linked polyubiquitination by MIB1 after RNA virus infection, or by NRDP1 after LPS stimulation at Lys-30 and Lys-401, participates in kinase activation. 'Lys-48'-linked polyubiquitination at Lys-670 by DTX4 leads to proteasomal degradation. 'Lys-48'-linked polyubiquitination by TRAIP also leads to proteasomal degradation. 'Lys-48'-linked polyubiquitination by TRAF7; leading to proteasomal degradation. 'Lys-63'-linked polyubiquitination by RNF128 at Lys-30 and Lys-401 leads to the activation of antiviral responses. 'Lys-48'-linked polyubiquitination after 'lys-33'-linked deubiquitination by USP38 promotes TBK1 degradation. In terms of processing, (Microbial infection) Interaction with SARS-CoV-2 M protein induces 'Lys-48'-linked ubiquitination which leads to proteasomal degradation. Post-translationally, (Microbial infection) Deubiquitinated by Epstein-Barr virus BPLF1 on both 'Lys-48' and 'Lys-63'-linked ubiquitin chains; leading to inhibition of type I interfewron production. Monomethylation at Lys-607 by SETD4 maximizes TBK1 activation and promotes efficient interferon signaling. In terms of tissue distribution, ubiquitous with higher expression in testis. Expressed in the ganglion cells, nerve fiber layer and microvasculature of the retina.

It is found in the cytoplasm. The enzyme catalyses L-seryl-[protein] + ATP = O-phospho-L-seryl-[protein] + ADP + H(+). It carries out the reaction L-threonyl-[protein] + ATP = O-phospho-L-threonyl-[protein] + ADP + H(+). Its function is as follows. Serine/threonine kinase that plays an essential role in regulating inflammatory responses to foreign agents. Following activation of toll-like receptors by viral or bacterial components, associates with TRAF3 and TANK and phosphorylates interferon regulatory factors (IRFs) IRF3 and IRF7 as well as DDX3X. This activity allows subsequent homodimerization and nuclear translocation of the IRFs leading to transcriptional activation of pro-inflammatory and antiviral genes including IFNA and IFNB. In order to establish such an antiviral state, TBK1 form several different complexes whose composition depends on the type of cell and cellular stimuli. Plays a key role in IRF3 activation: acts by first phosphorylating innate adapter proteins MAVS, STING1 and TICAM1 on their pLxIS motif, leading to recruitment of IRF3, thereby licensing IRF3 for phosphorylation by TBK1. Phosphorylated IRF3 dissociates from the adapter proteins, dimerizes, and then enters the nucleus to induce expression of interferons. Thus, several scaffolding molecules including FADD, TRADD, MAVS, AZI2, TANK or TBKBP1/SINTBAD can be recruited to the TBK1-containing-complexes. Under particular conditions, functions as a NF-kappa-B effector by phosphorylating NF-kappa-B inhibitor alpha/NFKBIA, IKBKB or RELA to translocate NF-Kappa-B to the nucleus. Restricts bacterial proliferation by phosphorylating the autophagy receptor OPTN/Optineurin on 'Ser-177', thus enhancing LC3 binding affinity and antibacterial autophagy. Phosphorylates SMCR8 component of the C9orf72-SMCR8 complex, promoting autophagosome maturation. Phosphorylates ATG8 proteins MAP1LC3C and GABARAPL2, thereby preventing their delipidation and premature removal from nascent autophagosomes. Seems to play a role in energy balance regulation by sustaining a state of chronic, low-grade inflammation in obesity, which leads to a negative impact on insulin sensitivity. Attenuates retroviral budding by phosphorylating the endosomal sorting complex required for transport-I (ESCRT-I) subunit VPS37C. Phosphorylates Borna disease virus (BDV) P protein. Plays an essential role in the TLR3- and IFN-dependent control of herpes virus HSV-1 and HSV-2 infections in the central nervous system. Acts both as a positive and negative regulator of the mTORC1 complex, depending on the context: activates mTORC1 in response to growth factors by catalyzing phosphorylation of MTOR, while it limits the mTORC1 complex by promoting phosphorylation of RPTOR. Acts as a positive regulator of the mTORC2 complex by mediating phosphorylation of MTOR, leading to increased phosphorylation and activation of AKT1. Phosphorylates and activates AKT1. Involved in the regulation of TNF-induced RIPK1-mediated cell death, probably acting via CYLD phosphorylation that in turn controls RIPK1 ubiquitination status. Also participates in the differentiation of T follicular regulatory cells together with the receptor ICOS. The sequence is that of Serine/threonine-protein kinase TBK1 from Homo sapiens (Human).